The chain runs to 165 residues: UPF0254 protein MmarC6_1720 (165 aa).

This sequence belongs to the UPF0254 family.

The chain is UPF0254 protein MmarC6_1720 from Methanococcus maripaludis (strain C6 / ATCC BAA-1332).